A 290-amino-acid chain; its full sequence is uncharacterized protein (290 aa).

This is an uncharacterized protein from Escherichia coli (strain K12).